The following is a 280-amino-acid chain: BURP domain protein USPL1 (280 aa).

Residues 1-24 (MASTFRLSISFLTLILFSLWVVEA) form the signal peptide. The region spanning 58–280 (YFTLNDLKLG…PLDNIVWVTK (223 aa)) is the BURP domain.

Expressed in cotyledons, radicle, floral buds, open flowers, roots and developing seeds, but not in leaves. Highly expressed in the root tips. Detected in young leaves, hypocotyls, stems and mature seed funiculum.

The protein localises to the protein storage vacuole. The protein resides in the golgi apparatus. It localises to the golgi stack. Its subcellular location is the trans-Golgi network. It is found in the prevacuolar compartment. In terms of biological role, associated with the protein storage vacuole formation. The polypeptide is BURP domain protein USPL1 (Arabidopsis thaliana (Mouse-ear cress)).